The following is a 309-amino-acid chain: UDP-N-acetylenolpyruvoylglucosamine reductase (309 aa).

Residues 34–221 enclose the FAD-binding PCMH-type domain; the sequence is RVGGPAQVLF…TAAREAAQPI (188 aa). Residue arginine 179 is part of the active site. The active-site Proton donor is the serine 228. Residue glutamate 298 is part of the active site.

The protein belongs to the MurB family. FAD is required as a cofactor.

Its subcellular location is the cytoplasm. The enzyme catalyses UDP-N-acetyl-alpha-D-muramate + NADP(+) = UDP-N-acetyl-3-O-(1-carboxyvinyl)-alpha-D-glucosamine + NADPH + H(+). The protein operates within cell wall biogenesis; peptidoglycan biosynthesis. Cell wall formation. The protein is UDP-N-acetylenolpyruvoylglucosamine reductase of Methylorubrum extorquens (strain PA1) (Methylobacterium extorquens).